A 233-amino-acid chain; its full sequence is Large ribosomal subunit protein uL1 (233 aa).

Belongs to the universal ribosomal protein uL1 family. Part of the 50S ribosomal subunit.

In terms of biological role, binds directly to 23S rRNA. The L1 stalk is quite mobile in the ribosome, and is involved in E site tRNA release. Its function is as follows. Protein L1 is also a translational repressor protein, it controls the translation of the L11 operon by binding to its mRNA. This chain is Large ribosomal subunit protein uL1, found in Geobacillus thermodenitrificans (strain NG80-2).